A 661-amino-acid polypeptide reads, in one-letter code: Peroxisomal acyl-coenzyme A oxidase 1 (661 aa).

S26 carries the post-translational modification Phosphoserine. Residue K65 is modified to N6-acetyllysine. At K89 the chain carries N6-succinyllysine. T139 is a binding site for FAD. N6-succinyllysine is present on K159. Position 178 (G178) interacts with FAD. N6-acetyllysine is present on K216. The residue at position 241 (K241) is an N6-succinyllysine. N6-acetyllysine is present on residues K255, K267, and K272. At K349 the chain carries N6-succinyllysine. The active-site Proton acceptor is E421. N6-acetyllysine; alternate is present on residues K437 and K446. N6-succinyllysine; alternate occurs at positions 437 and 446. K500 bears the N6-acetyllysine mark. K512 carries the post-translational modification N6-acetyllysine; alternate. K512 is subject to N6-succinyllysine; alternate. Residue K542 is modified to N6-succinyllysine. K637 is subject to N6-acetyllysine; alternate. Residue K637 is modified to N6-succinyllysine; alternate. Residue K643 is modified to N6-succinyllysine. Position 649 is a phosphoserine (S649). K652 carries the post-translational modification N6-acetyllysine. At K655 the chain carries N6-succinyllysine. The Microbody targeting signal motif lies at 659–661; sequence SKL.

Belongs to the acyl-CoA oxidase family. As to quaternary structure, homodimer. Interacts with LONP2. FAD serves as cofactor.

It localises to the peroxisome. The catalysed reaction is a 2,3-saturated acyl-CoA + O2 = a (2E)-enoyl-CoA + H2O2. The enzyme catalyses hexadecanoyl-CoA + O2 = (2E)-hexadecenoyl-CoA + H2O2. It catalyses the reaction dodecanoyl-CoA + O2 = (2E)-dodecenoyl-CoA + H2O2. It carries out the reaction octanoyl-CoA + O2 = (2E)-octenoyl-CoA + H2O2. The catalysed reaction is decanoyl-CoA + O2 = (2E)-decenoyl-CoA + H2O2. The enzyme catalyses tetradecanoyl-CoA + O2 = (2E)-tetradecenoyl-CoA + H2O2. It catalyses the reaction hexadecanedioyl-CoA + O2 = (2E)-hexadecenedioyl-CoA + H2O2. It carries out the reaction tetracosanoyl-CoA + O2 = (2E)-tetracosenoyl-CoA + H2O2. The catalysed reaction is glutaryl-CoA + O2 = (2E)-glutaconyl-CoA + H2O2. The enzyme catalyses hexanoyl-CoA + O2 = (2E)-hexenoyl-CoA + H2O2. It catalyses the reaction octadecanoyl-CoA + O2 = (2E)-octadecenoyl-CoA + H2O2. It carries out the reaction (5Z,8Z,11Z,14Z,17Z)-eicosapentaenoyl-CoA + O2 = (2E,5Z,8Z,11Z,14Z,17Z)-icosahexaenoyl-CoA + H2O2. The catalysed reaction is (6Z,9Z,12Z,15Z,18Z,21Z)-tetracosahexaenoyl-CoA + O2 = (2E,6Z,9Z,12Z,15Z,18Z,21Z)-tetracosaheptaenoyl-CoA + H2O2. It functions in the pathway lipid metabolism; peroxisomal fatty acid beta-oxidation. Its function is as follows. Involved in the initial and rate-limiting step of peroxisomal beta-oxidation of straight-chain saturated and unsaturated very-long-chain fatty acids. Catalyzes the desaturation of fatty acyl-CoAs such as palmitoyl-CoA (hexadecanoyl-CoA) to 2-trans-enoyl-CoAs ((2E)-enoyl-CoAs) such as (2E)-hexadecenoyl-CoA, and donates electrons directly to molecular oxygen (O(2)), thereby producing hydrogen peroxide (H(2)O(2)). This Cavia porcellus (Guinea pig) protein is Peroxisomal acyl-coenzyme A oxidase 1.